We begin with the raw amino-acid sequence, 562 residues long: IRK-interacting protein (562 aa).

Disordered stretches follow at residues 29–61 (ASLM…RPLP) and 303–322 (VVSQ…SEMP). Residues 36-61 (SSPSSNYSLRNPSSSSAASPASRPLP) show a composition bias toward low complexity. Residues 246-306 (SGVEKLKREL…LREATEVVSQ (61 aa)) adopt a coiled-coil conformation.

Interacts with IRK. In terms of tissue distribution, highly expressed in root tips, shoot apices and developing flowers.

The polypeptide is IRK-interacting protein (Arabidopsis thaliana (Mouse-ear cress)).